A 435-amino-acid chain; its full sequence is tRNA modification GTPase MnmE (435 aa).

The (6S)-5-formyl-5,6,7,8-tetrahydrofolate site is built by R20, E77, and K117. The TrmE-type G domain occupies 214 to 359 (GLKIVIAGAP…FIKKLESFCH (146 aa)). GTP is bound by residues 224 to 229 (NSGKSS), 243 to 249 (TEEAGTT), and 268 to 271 (DTAG). Mg(2+)-binding residues include S228 and T249. K435 provides a ligand contact to (6S)-5-formyl-5,6,7,8-tetrahydrofolate.

The protein belongs to the TRAFAC class TrmE-Era-EngA-EngB-Septin-like GTPase superfamily. TrmE GTPase family. Homodimer. Heterotetramer of two MnmE and two MnmG subunits. It depends on K(+) as a cofactor.

It is found in the cytoplasm. Functionally, exhibits a very high intrinsic GTPase hydrolysis rate. Involved in the addition of a carboxymethylaminomethyl (cmnm) group at the wobble position (U34) of certain tRNAs, forming tRNA-cmnm(5)s(2)U34. This Bartonella tribocorum (strain CIP 105476 / IBS 506) protein is tRNA modification GTPase MnmE.